We begin with the raw amino-acid sequence, 549 residues long: Mitogen-activated protein kinase 15 (549 aa).

The segment at 1-20 is ubiquitin-conjugating; that stretch reads MCAAEVDRHVAQRYLIKRRL. A Protein kinase domain is found at 14–305; the sequence is YLIKRRLGKG…AEQALQHPYV (292 aa). ATP contacts are provided by residues 20–28 and Lys-43; that span reads LGKGAYGIV. Asp-138 acts as the Proton acceptor in catalysis. Residue Thr-176 is modified to Phosphothreonine. The TXY motif lies at 176 to 178; that stretch reads TEY. A Phosphotyrosine modification is found at Tyr-178. Residues 266–286 form a necessary to interact with ESRRA, to regulate its subcellular localization and to inhibit its transcriptional activity region; sequence LDALLPPDTPPEALDLLKRLL. A requires for interaction with GABARAP, MAP1LC3B AND GABARAPL1 region spans residues 301–382; that stretch reads QHPYVQRFHC…ARTQSLKSGV (82 aa). The disordered stretch occupies residues 370–507; that stretch reads ASPARTQSLK…PEPRPGRRMF (138 aa). PXXXP motif repeat units lie at residues 380-384 and 387-391; these read SGVLP and PAETP. 2 PXXXP motif; regulates binding with chromatin and interaction with PCNA repeats span residues 395 to 399 and 403 to 407; these read RGPKP and PGHDP. Residues 403–416 are compositionally biased toward basic and acidic residues; it reads PGHDPEHVEVRRQS. Arg-451 carries the omega-N-methylarginine modification. Polar residues predominate over residues 456-467; that stretch reads SLTSQAEAQAAN. Positions 483-492 are enriched in low complexity; that stretch reads AVGARRVPSR. Residues 493–502 are compositionally biased toward basic and acidic residues; that stretch reads LPREAPEPRP.

This sequence belongs to the protein kinase superfamily. CMGC Ser/Thr protein kinase family. MAP kinase subfamily. In terms of assembly, interacts with TGFB1I1. Interacts with CSK/c-Src, ABL1 and RET. Interacts with GABARAP, MAP1LC3B and GABARAPL1; controls, in a kinase-dependent fashion, both basal and starvation-induced autophagy. Interacts with ESRRA; promotes re-localization of ESRRA to the cytoplasm through a XPO1-dependent mechanism then inhibits ESRRA transcriptional activity. Interacts with PCNA; the interaction is chromatin binding- and kinase activity-dependent and prevents MDM2-mediated PCNA destruction by inhibiting the association of PCNA with MDM2. Interacts with DVL2. Interacts with CLIC3; MAPK15 does not phosphorylates CLIC3. In terms of processing, autophosphorylated on Thr-176 and Tyr-178; activates the enzyme. Ubiquitinated. Ubiquitination may allow its tight kinase activity regulation and rapid turnover. May be ubiquitinated by a SCF E3 ligase. As to expression, expressed at all stages of oocyte meiotic maturation.

It is found in the cytoplasm. The protein localises to the cytoskeleton. The protein resides in the cilium basal body. Its subcellular location is the cell junction. It localises to the tight junction. It is found in the microtubule organizing center. The protein localises to the centrosome. The protein resides in the centriole. Its subcellular location is the cytoplasmic vesicle. It localises to the autophagosome. It is found in the golgi apparatus. The protein localises to the nucleus. The protein resides in the spindle. It catalyses the reaction L-seryl-[protein] + ATP = O-phospho-L-seryl-[protein] + ADP + H(+). The catalysed reaction is L-threonyl-[protein] + ATP = O-phospho-L-threonyl-[protein] + ADP + H(+). Its activity is regulated as follows. Activated by threonine and tyrosine phosphorylation. Inhibited by dual specificity phosphatases, such as DUSP1. Phosphorylation and activation in response to DNA damaging agents, serum stimulation. Constitutively activated when phosphorylated on Tyr-178. Activity depends on the relative rates of MAPK15 autophosphorylation and dephosphorylation by PTPN1. Functionally, atypical MAPK protein that regulates several process such as autophagy, ciliogenesis, protein trafficking/secretion and genome integrity, in a kinase activity-dependent manner. Controls both, basal and starvation-induced autophagy throught its interaction with GABARAP, MAP1LC3B and GABARAPL1 leading to autophagosome formation, SQSTM1 degradation and reduced MAP1LC3B inhibitory phosphorylation. Regulates primary cilium formation and the localization of ciliary proteins involved in cilium structure, transport, and signaling. Prevents the relocation of the sugar-adding enzymes from the Golgi to the endoplasmic reticulum, thereby restricting the production of sugar-coated proteins. Upon amino-acid starvation, mediates transitional endoplasmic reticulum site disassembly and inhibition of secretion. Binds to chromatin leading to MAPK15 activation and interaction with PCNA, that which protects genomic integrity by inhibiting MDM2-mediated degradation of PCNA. Regulates DA transporter (DAT) activity and protein expression via activation of RhoA. In response to H(2)O(2) treatment phosphorylates ELAVL1, thus preventing it from binding to the PDCD4 3'UTR and rendering the PDCD4 mRNA accessible to miR-21 and leading to its degradation and loss of protein expression. Also functions in a kinase activity-independent manner as a negative regulator of growth. Phosphorylates in vitro FOS and MBP. During oocyte maturation, plays a key role in the microtubule organization and meiotic cell cycle progression in oocytes, fertilized eggs, and early embryos. Interacts with ESRRA promoting its re-localization from the nucleus to the cytoplasm and then prevents its transcriptional activity. In Mus musculus (Mouse), this protein is Mitogen-activated protein kinase 15.